The primary structure comprises 607 residues: Serine/threonine-protein kinase sid2 (607 aa).

Ser-56, Ser-60, Ser-65, and Ser-86 each carry phosphoserine. A compositionally biased stretch (basic and acidic residues) spans 93–108; the sequence is DRSGELSYKDNNHWSD. Positions 93–118 are disordered; the sequence is DRSGELSYKDNNHWSDRSSTGSPRWE. The segment covering 109 to 118 has biased composition (polar residues); sequence RSSTGSPRWE. The Protein kinase domain maps to 208–508; the sequence is FQTITQVGQG…LKQVMQHPYF (301 aa). ATP is bound by residues 214–222 and Lys-237; that span reads VGQGGYGSV. Tyr-219 is modified (phosphotyrosine). The active-site Proton acceptor is the Asp-331. A Phosphoserine modification is found at Ser-402. In terms of domain architecture, AGC-kinase C-terminal spans 509–589; the sequence is SKIDWKNVRT…RHQKNSHPTS (81 aa). The interval 586–607 is disordered; that stretch reads HPTSSSSALSSPLSAPSFGTLL. The span at 589–607 shows a compositional bias: low complexity; the sequence is SSSSALSSPLSAPSFGTLL.

The protein belongs to the protein kinase superfamily. Ser/Thr protein kinase family. In terms of assembly, interacts with mob1 and cdc11.

The protein localises to the cytoplasm. Its subcellular location is the cytoskeleton. It is found in the microtubule organizing center. It localises to the spindle pole body. It carries out the reaction L-seryl-[protein] + ATP = O-phospho-L-seryl-[protein] + ADP + H(+). It catalyses the reaction L-threonyl-[protein] + ATP = O-phospho-L-threonyl-[protein] + ADP + H(+). Part of a signaling pathway. Required for initiation of medial ring constriction and septation. The protein is Serine/threonine-protein kinase sid2 (sid2) of Schizosaccharomyces pombe (strain 972 / ATCC 24843) (Fission yeast).